We begin with the raw amino-acid sequence, 336 residues long: MNQEMNYENTEMEQPTVVFPPENAELFDFDSDDNRTSAKTPALKAIGGGIKDKNGKVIGAGLWMAHENAEICQWKKDCTDTCDYSCMDHLKGMTPHGVDTKKVDDDGNDIIIPGSVILKPRMLVIGRSPLLKISEDSGYTVGVWVKGDNRFKGPDGKKNLYACVRRYFIIFLDEANKPLHDISQPIQLTARGYFQMEFDKMLMFFRSTMIKAYCEAMKKNATNMKEAWHSMCVFAPLFKSEMKGPSKDKQSKACITYGFDKPTKDNWLTMCVGRNKEAQDIYKIHVENKEWWQKSIKKDLQKSEEEEHPNDDHVYMTEEDDMEKIERGIESLGNGH.

Residues 297 to 316 show a composition bias toward basic and acidic residues; sequence KKDLQKSEEEEHPNDDHVYM. The tract at residues 297 to 336 is disordered; sequence KKDLQKSEEEEHPNDDHVYMTEEDDMEKIERGIESLGNGH.

This is an uncharacterized protein from Invertebrate iridescent virus 6 (IIV-6).